The following is a 483-amino-acid chain: Isocitrate dehydrogenase [NADP] (483 aa).

Thr-74 provides a ligand contact to NADP(+). Ser-83, Asn-85, Arg-89, Arg-99, and Arg-121 together coordinate D-threo-isocitrate. Asp-232 lines the Mg(2+) pocket. Residues 264–270 (HGSAPDI) and Asn-277 each bind NADP(+).

The protein belongs to the isocitrate and isopropylmalate dehydrogenases family. Homodimer. It depends on Mg(2+) as a cofactor. Requires Mn(2+) as cofactor.

The catalysed reaction is D-threo-isocitrate + NADP(+) = 2-oxoglutarate + CO2 + NADPH. Functionally, catalyzes the oxidative decarboxylation of isocitrate to 2-oxoglutarate and carbon dioxide with the concomitant reduction of NADP(+). The polypeptide is Isocitrate dehydrogenase [NADP] (icd) (Rickettsia typhi (strain ATCC VR-144 / Wilmington)).